The primary structure comprises 604 residues: MENQAHNTMGTSPCEAELQELMEQIDIMVSNKKMDWERKMRALETRLDLRDQELANAQTCLDQKGQEVGLLRQKLDSLEKCNLAMTQNYEGQLQSLKAQFSKLTNNFEKLRLHQMKQNKVPRKELPHLKEEIPFELSNLNQKLEEFRAKSREWDKQEILYQTHLISLDAQQKLLSEKCNQFQKQAQSYQTQLNGKKQCLEDSSSEIPRLICDPDPNCEINERDEFIIEKLKSAVNEIALSRNKLQDENQKLLQELKMYQRQCQAMEAGLSEVKSELQSRDDLLRIIEMERLQLHRELLKIGECQNAQGNKTRLESSYLPSIKEPERKIKELFSVMQDQPNHEKELNKIRSQLQQVEEYHNSEQERMRNEISDLTEELHQKEITIATVTKKAALLEKQLKMELEIKEKMLAKQKVSDMKYKAVRTENTHLKGMMGDLDPGEYMSMDFTNREQSRHTSINKLQYENERLRNDLAKLHVNGKSTWTNQNTYEETGRYAYQSQIKVEQNEERLSHDCEPNRSTMPPLPPSTFQAKEMTSPLVSDDDVFPLSPPDMSFPASLAAQHFLLEEEKRAKELEKLLNTHIDELQRHTEFTLNKYSKLKQNRHI.

Coiled-coil stretches lie at residues 14-59, 85-197, 226-278, and 336-399; these read CEAE…NAQT, MTQN…GKKQ, IIEK…ELQS, and QDQP…KQLK. Serine 547 is subject to Phosphoserine. A coiled-coil region spans residues 558–601; sequence AAQHFLLEEEKRAKELEKLLNTHIDELQRHTEFTLNKYSKLKQN.

Belongs to the CEP63 family. In terms of assembly, interacts with CEP152; the interaction is mutually exclusive with CEP63.

Its subcellular location is the cytoplasm. Its function is as follows. Key structural component of the deuterosome, a structure that promotes de novo centriole amplification in multiciliated cells. Deuterosome-mediated centriole amplification occurs in terminally differentiated multiciliated cells and can generate more than 100 centrioles. Probably sufficient for the specification and formation of the deuterosome inner core. Interacts with CEP152 and recruits PLK4 to activate centriole biogenesis. The polypeptide is Deuterosome assembly protein 1 (Homo sapiens (Human)).